Consider the following 370-residue polypeptide: tRNA-specific 2-thiouridylase MnmA (370 aa).

ATP is bound by residues 11 to 18 and M37; that span reads AMSGGVDS. The interaction with target base in tRNA stretch occupies residues 99-101; that stretch reads NPD. C104 serves as the catalytic Nucleophile. The cysteines at positions 104 and 201 are disulfide-linked. Position 129 (G129) interacts with ATP. An interaction with tRNA region spans residues 151–153; the sequence is KDQ. C201 (cysteine persulfide intermediate) is an active-site residue. The segment at 313–314 is interaction with tRNA; the sequence is RY.

It belongs to the MnmA/TRMU family. In terms of assembly, interacts with TusE.

It localises to the cytoplasm. It catalyses the reaction S-sulfanyl-L-cysteinyl-[protein] + uridine(34) in tRNA + AH2 + ATP = 2-thiouridine(34) in tRNA + L-cysteinyl-[protein] + A + AMP + diphosphate + H(+). Catalyzes the 2-thiolation of uridine at the wobble position (U34) of tRNA(Lys), tRNA(Glu) and tRNA(Gln), leading to the formation of s(2)U34, the first step of tRNA-mnm(5)s(2)U34 synthesis. Sulfur is provided by IscS, via a sulfur-relay system. Binds ATP and its substrate tRNAs. This chain is tRNA-specific 2-thiouridylase MnmA, found in Buchnera aphidicola subsp. Baizongia pistaciae (strain Bp).